The sequence spans 314 residues: MQGGDHGGMEMGVGSFTGGGGGGECSSSSATAAAAAAAAAAAAAAEAEERQLLKGEIAVHPLCEQLVAAHVGCLRVATPIDHLPLIDAQLAQSSGLLHSYAAHHRPFLSPHDKQELDSFLAQYMMLLCSFREQLQQHVRVHAVEAVMACREIEQSLQDLTGATLEEGTGATMSEDEDETAPMLEGPMDMGSDGHDLMGFGPLMPTDSERSLMERVRQELKIELKQGFKSRIEDVREEILRKRRAGKLPGDTTTILKQWWQQHSKWPYPTEDDKAKLVEETGLQLKQINNWFINQRKRNWHNNSQTSTLKSKRKR.

The ELK domain maps to 218 to 238; sequence ELKIELKQGFKSRIEDVREEI. Positions 239 to 302 form a DNA-binding region, homeobox; TALE-type; it reads LRKRRAGKLP…NQRKRNWHNN (64 aa).

The protein belongs to the TALE/KNOX homeobox family. In terms of tissue distribution, isoform 1 is expressed in roots and flowers, and at lower levels in leaf blades and leaf sheaths. Isoform 2 is expressed in roots and flowers.

Its subcellular location is the nucleus. The sequence is that of Homeobox protein knotted-1-like 3 (HOS66) from Oryza sativa subsp. japonica (Rice).